An 831-amino-acid polypeptide reads, in one-letter code: Probable DNA-directed RNA polymerase (831 aa).

Catalysis depends on residues D490, K560, and D738.

Belongs to the phage and mitochondrial RNA polymerase family.

The protein localises to the mitochondrion. It catalyses the reaction RNA(n) + a ribonucleoside 5'-triphosphate = RNA(n+1) + diphosphate. DNA-dependent RNA polymerase catalyzes the transcription of DNA into RNA using the four ribonucleoside triphosphates as substrates. This Gelasinospora sp. (strain G114) protein is Probable DNA-directed RNA polymerase.